The primary structure comprises 466 residues: tRNA modification GTPase MnmE (466 aa).

3 residues coordinate (6S)-5-formyl-5,6,7,8-tetrahydrofolate: Arg22, Glu87, and Arg126. One can recognise a TrmE-type G domain in the interval Gly222 to Tyr382. A K(+)-binding site is contributed by Asn232. Residues Asn232 to Ser237, Thr251 to Thr257, and Asp276 to Gly279 contribute to the GTP site. Ser236 is a binding site for Mg(2+). K(+) is bound by residues Thr251, Ile253, and Thr256. Thr257 provides a ligand contact to Mg(2+). Residue Lys466 participates in (6S)-5-formyl-5,6,7,8-tetrahydrofolate binding.

Belongs to the TRAFAC class TrmE-Era-EngA-EngB-Septin-like GTPase superfamily. TrmE GTPase family. As to quaternary structure, homodimer. Heterotetramer of two MnmE and two MnmG subunits. K(+) serves as cofactor.

The protein resides in the cytoplasm. In terms of biological role, exhibits a very high intrinsic GTPase hydrolysis rate. Involved in the addition of a carboxymethylaminomethyl (cmnm) group at the wobble position (U34) of certain tRNAs, forming tRNA-cmnm(5)s(2)U34. The chain is tRNA modification GTPase MnmE from Heliobacterium modesticaldum (strain ATCC 51547 / Ice1).